The following is a 453-amino-acid chain: Ribosomal protein uS12 methylthiotransferase RimO (453 aa).

An MTTase N-terminal domain is found at 9–124 (PKIGFVSLGC…VMDAVHKHMP (116 aa)). The [4Fe-4S] cluster site is built by Cys-18, Cys-54, Cys-83, Cys-155, Cys-159, and Cys-162. Positions 141–382 (LTPKHFAYLK…MLLQEEISKK (242 aa)) constitute a Radical SAM core domain. The 69-residue stretch at 385–453 (QAKVGKTMRV…ADAHDLWAEA (69 aa)) folds into the TRAM domain.

Belongs to the methylthiotransferase family. RimO subfamily. [4Fe-4S] cluster serves as cofactor.

It localises to the cytoplasm. The enzyme catalyses L-aspartate(89)-[ribosomal protein uS12]-hydrogen + (sulfur carrier)-SH + AH2 + 2 S-adenosyl-L-methionine = 3-methylsulfanyl-L-aspartate(89)-[ribosomal protein uS12]-hydrogen + (sulfur carrier)-H + 5'-deoxyadenosine + L-methionine + A + S-adenosyl-L-homocysteine + 2 H(+). In terms of biological role, catalyzes the methylthiolation of an aspartic acid residue of ribosomal protein uS12. This chain is Ribosomal protein uS12 methylthiotransferase RimO, found in Janthinobacterium sp. (strain Marseille) (Minibacterium massiliensis).